The following is a 1041-amino-acid chain: Sarcoplasmic/endoplasmic reticulum calcium ATPase 2 (1041 aa).

Residues 1–48 (MENAHTKTVEEVLAYFGVNESTGLSLEQVKKLKEKWGSNELPAEEGKT) are Cytoplasmic-facing. Residues 49–69 (LLELVIEQFEDLLVRILLLAA) traverse the membrane as a helical segment. Over 70 to 89 (CISFVLAWFEEGEETITAFV) the chain is Lumenal. A helical membrane pass occupies residues 90-110 (EPFVILLILVANAIVGVWQER). The Cytoplasmic portion of the chain corresponds to 111–253 (NAENAIEALK…QERTPLQQKL (143 aa)). Residues 254–273 (DEFGEQLSKVISLICIAVWI) traverse the membrane as a helical segment. Over 274-295 (INIGHFNDPVHGGSWIRGAIYY) the chain is Lumenal. The helical transmembrane segment at 296–313 (FKIAVALAVAAIPEGLPA) threads the bilayer. Val304, Ala305, Ile307, and Glu309 together coordinate Ca(2+). Residues 314-756 (VITTCLALGT…EEGRAIYNNM (443 aa)) lie on the Cytoplasmic side of the membrane. Asp351 functions as the 4-aspartylphosphate intermediate in the catalytic mechanism. Mg(2+) contacts are provided by Asp351 and Thr353. Thr353, Glu442, Arg489, Lys514, Arg559, Thr624, Gly625, Asp626, Arg677, and Lys683 together coordinate ATP. Asp702 serves as a coordination point for Mg(2+). Asn705 is a binding site for ATP. A helical transmembrane segment spans residues 757 to 776 (KQFIRYLISSNVGEVVCIFL). Ca(2+) is bound by residues Asn767 and Glu770. The Lumenal segment spans residues 777-786 (TAALGFPEAL). The chain crosses the membrane as a helical span at residues 787–807 (IPVQLLWVNLVTDGLPATALG). Residues 787-807 (IPVQLLWVNLVTDGLPATALG) form an interaction with PLN region. 3 residues coordinate Ca(2+): Asn795, Thr798, and Asp799. Residues 808 to 827 (FNPPDLDIMNKPPRNPKEPL) lie on the Cytoplasmic side of the membrane. A helical membrane pass occupies residues 828-850 (ISGWLFFRYLAIGCYVGAATVGA). Topologically, residues 851 to 896 (AAWWFIAADGGPRVTFYQLSHFLQCKEDNPDFSGVDCVVFESPYPM) are lumenal. Cysteines 875 and 887 form a disulfide. A helical transmembrane segment spans residues 897–916 (TMALSVLVTIEMCNALNSLS). Residue Glu907 participates in Ca(2+) binding. Topologically, residues 917–929 (ENQSLMRMPPWEN) are cytoplasmic. The helical transmembrane segment at 930–948 (IWLVGAICLSMSLHFLILY) threads the bilayer. The interval 931–942 (WLVGAICLSMSL) is interaction with PLN. The Lumenal segment spans residues 949-963 (VEPLPIIFQITPLNV). Residues 964 to 984 (TQWLMVLKISLPVILLDETLK) form a helical membrane-spanning segment. The Cytoplasmic segment spans residues 985–1041 (YVARNYLEPGKDSVQPATKPCSLSACTEGVSWPFVFITLPLVIWLYSTDTNFSDMFW).

Belongs to the cation transport ATPase (P-type) (TC 3.A.3) family. Type IIA subfamily. As to quaternary structure, interacts with sarcolipin (SLN). Interacts with phospholamban (PLN). Interacts with myoregulin (MRLN). Interacts with DWORF. Interacts with TMX2. It depends on Mg(2+) as a cofactor. Only isoform 2 is detected in heart, while both isoforms are expressed in brain, with isoform 2 being predominant.

It localises to the endoplasmic reticulum membrane. The protein localises to the sarcoplasmic reticulum membrane. The catalysed reaction is Ca(2+)(in) + ATP + H2O = Ca(2+)(out) + ADP + phosphate + H(+). With respect to regulation, reversibly inhibited by phospholamban (PLN) at low calcium concentrations. Inhibited by sarcolipin (SLN) and myoregulin (MRLN). Enhanced by DWORF; DWORF increases activity by displacing sarcolipin (SLN), phospholamban (PLN) and myoregulin (MRLN). This magnesium-dependent enzyme catalyzes the hydrolysis of ATP coupled with the translocation of calcium from the cytosol to the sarcoplasmic reticulum lumen. Isoform SERCA2A is involved in the regulation of the contraction/relaxation cycle. May act as a regulator of TNFSF11-mediated Ca(2+) signaling during osteoclastogenesis. The polypeptide is Sarcoplasmic/endoplasmic reticulum calcium ATPase 2 (ATP2A2) (Gallus gallus (Chicken)).